The sequence spans 279 residues: Thioredoxin-like 1-1, chloroplastic (279 aa).

Positions 56–202 (ALTERKARPL…FKDALAKHGP (147 aa)) constitute a Thioredoxin domain. Catalysis depends on nucleophile residues Cys125 and Cys128. Cys125 and Cys128 are joined by a disulfide.

This sequence belongs to the thioredoxin family.

Its function is as follows. Probable thiol-disulfide oxidoreductase that may participate in various redox reactions. In Oryza sativa subsp. japonica (Rice), this protein is Thioredoxin-like 1-1, chloroplastic.